A 649-amino-acid chain; its full sequence is tRNA-guanine(15) transglycosylase (649 aa).

The Nucleophile role is filled by aspartate 88. Positions 123 and 194 each coordinate substrate. Cysteine 280, cysteine 282, and cysteine 285 together coordinate Zn(2+). Residues 573-648 (NYRIVIDSSV…VAATLRGGIK (76 aa)) form the PUA domain.

The protein belongs to the archaeosine tRNA-ribosyltransferase family. Requires Zn(2+) as cofactor.

The enzyme catalyses guanosine(15) in tRNA + 7-cyano-7-deazaguanine = 7-cyano-7-carbaguanosine(15) in tRNA + guanine. Its pathway is tRNA modification; archaeosine-tRNA biosynthesis. Functionally, exchanges the guanine residue with 7-cyano-7-deazaguanine (preQ0) at position 15 in the dihydrouridine loop (D-loop) of archaeal tRNAs. In Methanococcus maripaludis (strain C5 / ATCC BAA-1333), this protein is tRNA-guanine(15) transglycosylase.